Consider the following 237-residue polypeptide: MSTPFYVSPEQLMKDKADYARKGIARGRAVVVLAHADGIAFVSENASRALHKISEIYDRVAFAAVGKYNEFENLRVAGVRYADVRGYSYDRSDVTARGLANAYAQTLGAIFTTESKPYEVELVVAEVGRRPETDQIYRLTYDGSVADEHGFVAMGGSADQISAKLRERWHAGLTLAEALRLAVEALGSDAAAEAAGTGPREIAPDHLEVAVLDRTRERRTFRRLSGPVLAGLLAGTG.

The protein belongs to the peptidase T1A family. In terms of assembly, the 20S proteasome core is composed of 14 alpha and 14 beta subunits that assemble into four stacked heptameric rings, resulting in a barrel-shaped structure. The two inner rings, each composed of seven catalytic beta subunits, are sandwiched by two outer rings, each composed of seven alpha subunits. The catalytic chamber with the active sites is on the inside of the barrel. Has a gated structure, the ends of the cylinder being occluded by the N-termini of the alpha-subunits. Is capped by the proteasome-associated ATPase, ARC.

It is found in the cytoplasm. The protein operates within protein degradation; proteasomal Pup-dependent pathway. With respect to regulation, the formation of the proteasomal ATPase ARC-20S proteasome complex, likely via the docking of the C-termini of ARC into the intersubunit pockets in the alpha-rings, may trigger opening of the gate for substrate entry. Interconversion between the open-gate and close-gate conformations leads to a dynamic regulation of the 20S proteasome proteolysis activity. Functionally, component of the proteasome core, a large protease complex with broad specificity involved in protein degradation. This is Proteasome subunit alpha from Kineococcus radiotolerans (strain ATCC BAA-149 / DSM 14245 / SRS30216).